A 336-amino-acid chain; its full sequence is Prenytransferase ascA (336 aa).

Positions 1-26 (MAAKSRSPKRGTSEKTPLVEKEAPYQ) are disordered. Residues 11 to 23 (GTSEKTPLVEKEA) are compositionally biased toward basic and acidic residues. The next 8 membrane-spanning stretches (helical) occupy residues 52–72 (PHGN…ASAI), 74–94 (PTEL…TFLM), 131–151 (GHVF…SLPI), 179–199 (VILG…VGLP), 206–226 (FVPT…YDVV), 251–271 (LEGL…TLGY), 272–292 (LVGM…FGLV), and 314–334 (FAIL…DYVV).

Belongs to the UbiA prenyltransferase family. The cofactor is Mg(2+).

It is found in the membrane. It catalyses the reaction orsellinate + (2E,6E)-farnesyl diphosphate = ilicicolinate B + diphosphate. Its pathway is secondary metabolite biosynthesis; terpenoid biosynthesis. Functionally, prenytransferase; part of the asc-1 gene cluster that mediates the biosynthesis of both ascochlorin and ascofuranone, a strong inhibitor of cyanide-insensitive alternative oxidases and a promising drug candidate against African trypanosomiasis. The first step in the pathway is performed by the non-reducing polyketide synthase ascC that produces orsellinic acid by condensing acetyl-CoA with 3 malonyl-CoA units. Orsellinic acid is then prenylated by the prenyltransferase ascA to yield ilicicolinic acid B. Ilicicolinic acid B is further reduced to ilicicolin B by the reductase ascB. The halogenase ascD then chlorinates ilicicolin B to produce ilicicolin A which is converted to ilicicolin A epoxide by the cytochrome P450 monooxygenase ascE that catalyzes stereoselective epoxidation of the terminal double bond of the prenyl group. Ilicicolin A epoxide is the last common precursor for the biosynthesis of ascofuranone and ascochlorin. The terpene cyclase ascF produces a monocyclic terpene, and the cyclization reaction is proposed to be initiated by protonation of the terminal epoxide of ilicicolin A epoxide to generate a monocyclic tertiarycation, which is followed by a series of hydride and methyl shifts with abstraction of proton, leading to the formation of the (14S,15R,19R)-trimethylcyclohexanone ring structure of ilicicolin C, which is finally reduced to ascochlorin by the dehydrogenase ascG. On the other hand, ilicicolin A epoxide is hydroxylated by the cytochrome P450 monooxygenase ascH, and the resultant product is cyclized by the terpene cyclase ascI to ascofuranol via protonation-initiated epoxide ring opening, which facilitates the 6-endo-tet cyclization to form the tetrahy-drofuran ring. Finally, ascofuranol is oxidized into ascofuranone by ascJ. This chain is Prenytransferase ascA, found in Acremonium egyptiacum (Oospora egyptiaca).